Reading from the N-terminus, the 346-residue chain is Biotin synthase (346 aa).

One can recognise a Radical SAM core domain in the interval 38-256; it reads KQIQVSTLLS…IAVARIMMPT (219 aa). [4Fe-4S] cluster is bound by residues cysteine 53, cysteine 57, and cysteine 60. Residues cysteine 97, cysteine 128, cysteine 188, and arginine 260 each coordinate [2Fe-2S] cluster.

Belongs to the radical SAM superfamily. Biotin synthase family. Homodimer. [4Fe-4S] cluster serves as cofactor. It depends on [2Fe-2S] cluster as a cofactor.

The catalysed reaction is (4R,5S)-dethiobiotin + (sulfur carrier)-SH + 2 reduced [2Fe-2S]-[ferredoxin] + 2 S-adenosyl-L-methionine = (sulfur carrier)-H + biotin + 2 5'-deoxyadenosine + 2 L-methionine + 2 oxidized [2Fe-2S]-[ferredoxin]. Its pathway is cofactor biosynthesis; biotin biosynthesis; biotin from 7,8-diaminononanoate: step 2/2. Its function is as follows. Catalyzes the conversion of dethiobiotin (DTB) to biotin by the insertion of a sulfur atom into dethiobiotin via a radical-based mechanism. The polypeptide is Biotin synthase (Salmonella arizonae (strain ATCC BAA-731 / CDC346-86 / RSK2980)).